We begin with the raw amino-acid sequence, 396 residues long: MSKLKLNPYFGEYGGMYVPQILVPALKQLETAFVEAQEDDDFKAEFTDLLKNYAGRPTALTLTRNLSPNPMVKIYLKREDLLHGGAHKTNQVLGQALLAKRMGKKEIIAETGAGQHGVATALACALLGLKCKVYMGAKDVARQSPNVFRMRLMGAEVIPVTSGSATLKDACNEAMRDWSGSYEKAHYLLGTAAGPHPFPTIVREFQRIIGEETKKQMLEREGRLPDAVIACVGGGSNAIGMFADFIDEPSVELIGVEPAGKGIDTPMHGAPLKHGKTGIFFGMKAPLMQNSEGQIEESYSISAGLDFPSVGPQHAHLNATGRARYESATDDEALEAFQQLARCEGIIPALESAHAIAYAVKMARECTKETILVVNLSGRGDKDIFTVSDILNGKEV.

N6-(pyridoxal phosphate)lysine is present on lysine 88.

Belongs to the TrpB family. In terms of assembly, tetramer of two alpha and two beta chains. Pyridoxal 5'-phosphate is required as a cofactor.

The enzyme catalyses (1S,2R)-1-C-(indol-3-yl)glycerol 3-phosphate + L-serine = D-glyceraldehyde 3-phosphate + L-tryptophan + H2O. The protein operates within amino-acid biosynthesis; L-tryptophan biosynthesis; L-tryptophan from chorismate: step 5/5. In terms of biological role, the beta subunit is responsible for the synthesis of L-tryptophan from indole and L-serine. This Shewanella baltica (strain OS155 / ATCC BAA-1091) protein is Tryptophan synthase beta chain.